An 883-amino-acid polypeptide reads, in one-letter code: Collagen, type I, alpha 1b (883 aa).

The interval 1-883 (QMSYVDHSKS…LGGSNDVELR (883 aa)) is disordered. Positions 13-33 (PPQPGPMGPMGPRGPPGPPGS) are enriched in pro residues. Composition is skewed to low complexity over residues 34 to 57 (SGPQ…AMGS), 113 to 122 (VPGVMGARGR), and 129 to 140 (SGARGNDGNTGP). Composition is skewed to gly residues over residues 147–161 (TGGE…GNEG) and 185–194 (GTDGGPGAKG). 3 stretches are compositionally biased toward low complexity: residues 195-205 (SPGAAGLAGAP), 214-223 (AQGAVGAPGP), and 230-248 (PGAS…PGPA). A compositionally biased stretch (gly residues) spans 285–297 (GADGGAGGKGAPG). Low complexity-rich tracts occupy residues 310–326 (ATGE…PGSK) and 390–402 (VGAP…AGPA). Positions 415–424 (GAPGLGGPTG) are enriched in gly residues. Low complexity predominate over residues 425 to 444 (ARGAPGPAGNDGAKGEPGAA). 2 stretches are compositionally biased toward gly residues: residues 445–454 (GAPGGLGAPG) and 478–487 (GGKGGDGAPG). The segment covering 512-542 (AGPTGPRGETGPPGPAGFAGPPGADGQPGAK) has biased composition (low complexity). Residues 564–573 (GPKGGAGPPG) show a composition bias toward gly residues. 3 stretches are compositionally biased toward low complexity: residues 574 to 584 (ATGFPGPAGRV), 717 to 726 (APGAVGPSGK), and 742 to 756 (SGPA…PAGA). A compositionally biased stretch (basic and acidic residues) spans 757–771 (KGDRGEAGEAGDRGH). Residues 792–812 (PAGASGPAGPRGPAGSNGAPG) show a composition bias toward low complexity. Over residues 821–836 (AGPPGPPGPAGPPGPP) the composition is skewed to pro residues.

The protein belongs to the fibrillar collagen family.

In Epinephelus costae (Goldblotch grouper), this protein is Collagen, type I, alpha 1b.